The following is a 292-amino-acid chain: 5,10-methylenetetrahydrofolate reductase (292 aa).

Glu-28 (proton donor/acceptor) is an active-site residue. Residue Thr-59 participates in NADH binding. Residues Tyr-60, Ala-62, His-88, Arg-118, Gly-119, Asp-120, Ala-132, Tyr-152, His-156, Asp-165, Asn-168, Lys-171, and Lys-172 each coordinate FAD. Asp-120 is a (6S)-5-methyl-5,6,7,8-tetrahydrofolate binding site. Gln-183 serves as a coordination point for NADH. (6S)-5-methyl-5,6,7,8-tetrahydrofolate-binding residues include Gln-183, Gln-219, and Lys-279.

The protein belongs to the methylenetetrahydrofolate reductase family. Requires FAD as cofactor.

It carries out the reaction (6S)-5-methyl-5,6,7,8-tetrahydrofolate + NAD(+) = (6R)-5,10-methylene-5,6,7,8-tetrahydrofolate + NADH + H(+). It participates in one-carbon metabolism; tetrahydrofolate interconversion. Its pathway is amino-acid biosynthesis; L-methionine biosynthesis via de novo pathway. In terms of biological role, catalyzes the NADH-dependent reduction of 5,10-methylenetetrahydrofolate to 5-methyltetrahydrofolate. Is required to provide the methyl group necessary for methionine synthetase to convert homocysteine to methionine; the methyl group is given by 5-methyltetrahydrofolate. In Buchnera aphidicola subsp. Schizaphis graminum (strain Sg), this protein is 5,10-methylenetetrahydrofolate reductase (metF).